The following is a 340-amino-acid chain: Uroporphyrinogen decarboxylase (340 aa).

Residues 21 to 25 (RQAGR), D71, Y148, S203, and H316 each bind substrate.

Belongs to the uroporphyrinogen decarboxylase family. In terms of assembly, homodimer.

The protein localises to the cytoplasm. The enzyme catalyses uroporphyrinogen III + 4 H(+) = coproporphyrinogen III + 4 CO2. The protein operates within porphyrin-containing compound metabolism; protoporphyrin-IX biosynthesis; coproporphyrinogen-III from 5-aminolevulinate: step 4/4. Functionally, catalyzes the decarboxylation of four acetate groups of uroporphyrinogen-III to yield coproporphyrinogen-III. The chain is Uroporphyrinogen decarboxylase from Campylobacter concisus (strain 13826).